The chain runs to 987 residues: Mediator of RNA polymerase II transcription subunit 24 (987 aa).

Short sequence motifs (LXXLL motif) lie at residues 128–132, 344–348, 446–450, 555–559, 786–790, and 855–859; these read LHWLL, LTPLL, LDLLL, LVALL, LPGLL, and LMRLL. Serine 860 and serine 871 each carry phosphoserine.

This sequence belongs to the Mediator complex subunit 24 family. As to quaternary structure, component of the Mediator complex, which is composed of MED1, MED4, MED6, MED7, MED8, MED9, MED10, MED11, MED12, MED13, MED13L, MED14, MED15, MED16, MED17, MED18, MED19, MED20, MED21, MED22, MED23, MED24, MED25, MED26, MED27, MED29, MED30, MED31, CCNC, CDK8 and CDC2L6/CDK11. The MED12, MED13, CCNC and CDK8 subunits form a distinct module termed the CDK8 module. Mediator containing the CDK8 module is less active than Mediator lacking this module in supporting transcriptional activation. Individual preparations of the Mediator complex lacking one or more distinct subunits have been variously termed ARC, CRSP, DRIP, PC2, SMCC and TRAP. Interacts with AR.

It localises to the nucleus. Functionally, component of the Mediator complex, a coactivator involved in the regulated transcription of nearly all RNA polymerase II-dependent genes. Mediator functions as a bridge to convey information from gene-specific regulatory proteins to the basal RNA polymerase II transcription machinery. Mediator is recruited to promoters by direct interactions with regulatory proteins and serves as a scaffold for the assembly of a functional preinitiation complex with RNA polymerase II and the general transcription factors. The chain is Mediator of RNA polymerase II transcription subunit 24 (Med24) from Rattus norvegicus (Rat).